A 123-amino-acid polypeptide reads, in one-letter code: uncharacterized protein (123 aa).

The 101-residue stretch at 17 to 117 (SNDNAFLVDV…NNQDKGWKQN (101 aa)) folds into the Rhodanese domain.

This is an uncharacterized protein from Rickettsia rickettsii.